A 400-amino-acid chain; its full sequence is Subtilisin-like protease CPC735_047380 (400 aa).

An N-terminal signal peptide occupies residues 1–19 (MARINVVVSFLAALAVVQA). Residues 20–118 (AQLLNLDGQK…IEPQRTFRAF (99 aa)) constitute a propeptide that is removed on maturation. Residues 35-116 (SYVVVMNDGL…NYIEPQRTFR (82 aa)) form the Inhibitor I9 domain. Residues 128–400 (SWGLGRISHT…DKLLYNGSGQ (273 aa)) enclose the Peptidase S8 domain. The N-linked (GlcNAc...) asparagine glycan is linked to Asn153. Active-site charge relay system residues include Asp160 and His191. Residues Asn244 and Asn252 are each glycosylated (N-linked (GlcNAc...) asparagine). Ser346 functions as the Charge relay system in the catalytic mechanism. An N-linked (GlcNAc...) asparagine glycan is attached at Asn396.

This sequence belongs to the peptidase S8 family.

It is found in the secreted. In terms of biological role, secreted subtilisin-like serine protease with keratinolytic activity that contributes to pathogenicity. In Coccidioides posadasii (strain C735) (Valley fever fungus), this protein is Subtilisin-like protease CPC735_047380.